The primary structure comprises 365 residues: Probable 7-methylxanthine methyltransferase 3 (365 aa).

Position 18 (Tyr18) interacts with S-adenosyl-L-homocysteine. Thr25 contributes to the theobromine binding site. Positions 62, 67, 99, 100, 132, and 133 each coordinate S-adenosyl-L-homocysteine. Residues Tyr150, His153, and Trp154 each contribute to the theobromine site. Positions 170, 258, and 259 each coordinate Mg(2+). Phe311 provides a ligand contact to theobromine.

This sequence belongs to the methyltransferase superfamily. Type-7 methyltransferase family. Mg(2+) serves as cofactor.

The catalysed reaction is 7-methylxanthine + S-adenosyl-L-methionine = theobromine + S-adenosyl-L-homocysteine + H(+). The protein operates within alkaloid biosynthesis. Its function is as follows. Involved in the biosynthesis of theobromine. The polypeptide is Probable 7-methylxanthine methyltransferase 3 (Theobroma cacao (Cacao)).